Consider the following 309-residue polypeptide: Maintenance of mitochondrial morphology protein 1 (309 aa).

Over 1–16 (MGNAYIFSLQPTFTQG) the chain is Lumenal. A helical transmembrane segment spans residues 17-37 (LILGQFSILFLLVLVLKYLFF). Residues 38–309 (DTVSDHAYRT…EQQAGELPVN (272 aa)) lie on the Cytoplasmic side of the membrane. Residues 84-293 (ECESADWLNA…LPGLASVSEV (210 aa)) form the SMP-LTD domain.

Belongs to the MMM1 family. Homodimer. Component of the ER-mitochondria encounter structure (ERMES) or MDM complex, composed of MMM1, MDM10, MDM12 and MDM34. An MMM1 homodimer associates with one molecule of MDM12 on each side in a pairwise head-to-tail manner, and the SMP-LTD domains of MMM1 and MDM12 generate a continuous hydrophobic tunnel for phospholipid trafficking.

It localises to the endoplasmic reticulum membrane. Its function is as follows. Component of the ERMES/MDM complex, which serves as a molecular tether to connect the endoplasmic reticulum (ER) and mitochondria. Components of this complex are involved in the control of mitochondrial shape and protein biogenesis, and function in nonvesicular lipid trafficking between the ER and mitochondria. The MDM12-MMM1 subcomplex functions in the major beta-barrel assembly pathway that is responsible for biogenesis of all outer membrane beta-barrel proteins, and acts in a late step after the SAM complex. The MDM10-MDM12-MMM1 subcomplex further acts in the TOM40-specific pathway after the action of the MDM12-MMM1 complex. Essential for establishing and maintaining the structure of mitochondria and maintenance of mtDNA nucleoids. This chain is Maintenance of mitochondrial morphology protein 1, found in Postia placenta (strain ATCC 44394 / Madison 698-R) (Brown rot fungus).